Reading from the N-terminus, the 143-residue chain is ATP synthase subunit b' (143 aa).

The chain crosses the membrane as a helical span at residues 6–26 (ATLPFMALQFLLLAAVLNAIF).

The protein belongs to the ATPase B chain family. As to quaternary structure, F-type ATPases have 2 components, F(1) - the catalytic core - and F(0) - the membrane proton channel. F(1) has five subunits: alpha(3), beta(3), gamma(1), delta(1), epsilon(1). F(0) has four main subunits: a(1), b(1), b'(1) and c(10-14). The alpha and beta chains form an alternating ring which encloses part of the gamma chain. F(1) is attached to F(0) by a central stalk formed by the gamma and epsilon chains, while a peripheral stalk is formed by the delta, b and b' chains.

It localises to the cellular thylakoid membrane. F(1)F(0) ATP synthase produces ATP from ADP in the presence of a proton or sodium gradient. F-type ATPases consist of two structural domains, F(1) containing the extramembraneous catalytic core and F(0) containing the membrane proton channel, linked together by a central stalk and a peripheral stalk. During catalysis, ATP synthesis in the catalytic domain of F(1) is coupled via a rotary mechanism of the central stalk subunits to proton translocation. In terms of biological role, component of the F(0) channel, it forms part of the peripheral stalk, linking F(1) to F(0). The b'-subunit is a diverged and duplicated form of b found in plants and photosynthetic bacteria. This is ATP synthase subunit b' from Nostoc punctiforme (strain ATCC 29133 / PCC 73102).